Reading from the N-terminus, the 315-residue chain is Cytoplasmic dynein intermediate light chain DYN3 (315 aa).

The protein belongs to the dynein light intermediate chain DYN3 family. As to quaternary structure, the cytoplasmic dynein is composed of at least two heavy chains and a number of intermediate and light chains.

It localises to the cytoplasm. It is found in the cytoskeleton. Its function is as follows. Component of the cytoplasmic dynein which acts as a motor for the intracellular retrograde motility of vesicles and organelles along microtubules. May play an important role in the proper orientation of the mitotic spindle into the budding daughter cell yeast. Probably required for normal progression of the cell cycle. The polypeptide is Cytoplasmic dynein intermediate light chain DYN3 (DYN3) (Candida glabrata (strain ATCC 2001 / BCRC 20586 / JCM 3761 / NBRC 0622 / NRRL Y-65 / CBS 138) (Yeast)).